A 247-amino-acid polypeptide reads, in one-letter code: Terpene cyclase adrI (247 aa).

5 consecutive transmembrane segments (helical) span residues 20–40 (VAEFLRILAGICWTLNYFSML), 51–71 (TGIFPLCNDIGWEFIYAFIYP), 76–96 (HWEGGVRVWFLVHCIVIFFII), 112–132 (NLYFLYGIVTIGFAIGQYSFA), and 141–161 (FFYGGVLCQTLASLGPIAQIL). N164 carries an N-linked (GlcNAc...) asparagine glycan. A run of 2 helical transmembrane segments spans residues 179–199 (FGGFIKLTIYYLTGNAAGPWF) and 205–225 (KFYIGLTLILDFTYPICYYVI).

This sequence belongs to the paxB family.

The protein localises to the membrane. The protein operates within secondary metabolite biosynthesis; terpenoid biosynthesis. Its function is as follows. Terpene cyclase; part of the gene cluster that mediates the biosynthesis of andrastins, meroterpenoid compounds that exhibit inhibitory activity against ras farnesyltransferase, suggesting that they could be promising leads for antitumor agents. The first step of the pathway is the synthesis of 3,5-dimethylorsellinic acid (DMOA) by the polyketide synthase adrD via condensation of one acetyl-CoA starter unit with 3 malonyl-CoA units and 2 methylations. DMAO is then converted to farnesyl-DMAO by the prenyltransferase adrG. The methyltransferase adrK catalyzes the methylation of the carboxyl group of farnesyl-DMAO to farnesyl-DMAO methyl ester which is further converted to epoxyfarnesyl-DMAO methyl ester by the FAD-dependent monooxygenase adrH. The terpene cyclase adrI then catalyzes the carbon skeletal rearrangement to generate the andrastin E, the first compound in the pathway having the andrastin scaffold, with the tetracyclic ring system. The post-cyclization tailoring enzymes adrF, adrE, adrJ, and adrA, are involved in the conversion of andrastin E into andrastin A. The short chain dehydrogenase adrF is responsible for the oxidation of the C-3 a hydroxyl group of andrastin E to yield the corresponding ketone, andrastin D. The ketoreductase adrE stereoselectively reduces the carbonyl moiety to reverse the stereochemistry of the C-3 position to yield andrastin F. The acetyltransferase adrJ is the acetyltransferase that attaches the acetyl group to the C-3 hydroxyl group of andrastin F to yield andrastin C. Finally, the cytochrome P450 monooxygenase adrA catalyzes two sequential oxidation reactions of the C-23 methyl group, to generate the corresponding alcohol andrastin B, and aldehyde andrastin A. The polypeptide is Terpene cyclase adrI (Penicillium rubens (strain ATCC 28089 / DSM 1075 / NRRL 1951 / Wisconsin 54-1255) (Penicillium chrysogenum)).